The following is a 276-amino-acid chain: Glutamate racemase (276 aa).

Residues 10–11 (DS) and 42–43 (YG) each bind substrate. C73 functions as the Proton donor/acceptor in the catalytic mechanism. Position 74–75 (74–75 (NS)) interacts with substrate. The active-site Proton donor/acceptor is the C183. Residue 184–185 (TH) coordinates substrate.

The protein belongs to the aspartate/glutamate racemases family.

It carries out the reaction L-glutamate = D-glutamate. It participates in cell wall biogenesis; peptidoglycan biosynthesis. Provides the (R)-glutamate required for cell wall biosynthesis. In Parafrankia sp. (strain EAN1pec), this protein is Glutamate racemase.